The sequence spans 373 residues: Pectin lyase D (373 aa).

Positions 1 to 19 (MKYAAALTAIAALAARAAA) are cleaved as a signal peptide. 2 disulfide bridges follow: cysteine 82–cysteine 101 and cysteine 91–cysteine 225. The N-linked (GlcNAc...) asparagine glycan is linked to asparagine 128. Arginine 255 is a catalytic residue. Asparagine 274 carries N-linked (GlcNAc...) asparagine glycosylation. Cysteine 321 and cysteine 329 are disulfide-bonded. Asparagine 348 carries an N-linked (GlcNAc...) asparagine glycan. The segment covering 354 to 366 (LPSADAASTSPAS) has biased composition (low complexity). The tract at residues 354–373 (LPSADAASTSPASNAGQGNL) is disordered.

The protein belongs to the polysaccharide lyase 1 family. In terms of processing, may be O-glycosylated; does not contain N-acetylglucosamine.

The protein localises to the secreted. It carries out the reaction Eliminative cleavage of (1-&gt;4)-alpha-D-galacturonan methyl ester to give oligosaccharides with 4-deoxy-6-O-methyl-alpha-D-galact-4-enuronosyl groups at their non-reducing ends.. Its function is as follows. Pectinolytic enzymes consist of four classes of enzymes: pectin lyase, polygalacturonase, pectin methylesterase and rhamnogalacturonase. Among pectinolytic enzymes, pectin lyase is the most important in depolymerization of pectin, since it cleaves internal glycosidic bonds of highly methylated pectins. This is Pectin lyase D (pelD) from Aspergillus niger.